Reading from the N-terminus, the 350-residue chain is Serine/arginine-rich splicing factor RS40 (350 aa).

2 consecutive RRM domains span residues 2 to 74 (KPVF…WTKS) and 97 to 168 (KTLF…YAVK). Composition is skewed to basic and acidic residues over residues 73–82 (KSERGGDKRS) and 167–187 (VKDD…DRSP). Disordered regions lie at residues 73 to 94 (KSER…SSMR) and 167 to 350 (VKDD…PADE). Residues Ser-193, Ser-195, and Ser-211 each carry the phosphoserine modification. Basic and acidic residues-rich tracts occupy residues 216-227 (YRKERTSPDYGR) and 240-255 (GSPE…DSPR). Ser-241, Ser-262, Ser-278, Ser-298, Ser-308, Ser-335, and Ser-340 each carry phosphoserine. Residues 272-289 (NKRERMSPNHSPFKKESP) are compositionally biased toward basic and acidic residues. The segment covering 299–308 (PIERRERSRS) has biased composition (basic and acidic residues).

Belongs to the splicing factor SR family. RS subfamily. Component of the spliceosome. Interacts with SNRNP35. Interacts with CYP59. Interacts with RCF3 and CPL1. Interacts with DRB1/HYL1 and SE. As to expression, highly expressed in roots and flowers. A presumably longer alternatively spliced form is found in leaves, stems and flowers.

The protein resides in the nucleus. The protein localises to the nucleus speckle. Its function is as follows. Required for constitutive and alternative pre-mRNA splicing. Involved in primary miRNA processing and pri-miRNA biogenesis. Binds both intronless and intron-containing pri-miRNAs. The polypeptide is Serine/arginine-rich splicing factor RS40 (RS40) (Arabidopsis thaliana (Mouse-ear cress)).